The chain runs to 142 residues: Putative pre-16S rRNA nuclease (142 aa).

Belongs to the YqgF nuclease family.

The protein resides in the cytoplasm. Functionally, could be a nuclease involved in processing of the 5'-end of pre-16S rRNA. This Malacoplasma penetrans (strain HF-2) (Mycoplasma penetrans) protein is Putative pre-16S rRNA nuclease.